A 644-amino-acid chain; its full sequence is Exoribonuclease 2 (644 aa).

Residues arginine 189–lysine 516 enclose the RNB domain. In terms of domain architecture, S1 motif spans glycine 561–valine 643.

This sequence belongs to the RNR ribonuclease family. RNase II subfamily.

Its subcellular location is the cytoplasm. It catalyses the reaction Exonucleolytic cleavage in the 3'- to 5'-direction to yield nucleoside 5'-phosphates.. In terms of biological role, involved in mRNA degradation. Hydrolyzes single-stranded polyribonucleotides processively in the 3' to 5' direction. This is Exoribonuclease 2 from Shigella sonnei (strain Ss046).